The sequence spans 239 residues: Large ribosomal subunit protein uL2 (239 aa).

Disordered stretches follow at residues 1–21 and 203–239; these read MGKS…KSPS and PFGG…GRRK. Residues 222-239 show a composition bias toward basic residues; that stretch reads PPGRKVGHIAARRTGRRK.

Belongs to the universal ribosomal protein uL2 family. In terms of assembly, part of the 50S ribosomal subunit. Forms a bridge to the 30S subunit in the 70S ribosome.

One of the primary rRNA binding proteins. Required for association of the 30S and 50S subunits to form the 70S ribosome, for tRNA binding and peptide bond formation. It has been suggested to have peptidyltransferase activity; this is somewhat controversial. Makes several contacts with the 16S rRNA in the 70S ribosome. In Pyrococcus furiosus (strain ATCC 43587 / DSM 3638 / JCM 8422 / Vc1), this protein is Large ribosomal subunit protein uL2.